Reading from the N-terminus, the 343-residue chain is Phenylalanine--tRNA ligase alpha subunit (343 aa).

A Mg(2+)-binding site is contributed by glutamate 256.

Belongs to the class-II aminoacyl-tRNA synthetase family. Phe-tRNA synthetase alpha subunit type 1 subfamily. In terms of assembly, tetramer of two alpha and two beta subunits. Requires Mg(2+) as cofactor.

The protein resides in the cytoplasm. It catalyses the reaction tRNA(Phe) + L-phenylalanine + ATP = L-phenylalanyl-tRNA(Phe) + AMP + diphosphate + H(+). The sequence is that of Phenylalanine--tRNA ligase alpha subunit from Prosthecochloris aestuarii (strain DSM 271 / SK 413).